The sequence spans 327 residues: uncharacterized protein (327 aa).

Disordered regions lie at residues 127–170 and 298–327; these read LSEF…GIYR and NFED…LKRR. A phosphoserine mark is found at serine 153, serine 154, and serine 309. Residues 317 to 327 show a composition bias toward basic residues; the sequence is YRKRKKNLKRR.

This is an uncharacterized protein from Schizosaccharomyces pombe (strain 972 / ATCC 24843) (Fission yeast).